The chain runs to 282 residues: Small ribosomal subunit protein uS2 (282 aa).

The interval 245 to 265 (AEEAVEELPLPTGEAQDEASS) is disordered.

The protein belongs to the universal ribosomal protein uS2 family.

The chain is Small ribosomal subunit protein uS2 from Chlamydia trachomatis serovar A (strain ATCC VR-571B / DSM 19440 / HAR-13).